Reading from the N-terminus, the 125-residue chain is Protein ApaG (125 aa).

Residues 1–125 (MINSPRVCVQ…FRLAIPSLIN (125 aa)) enclose the ApaG domain.

The sequence is that of Protein ApaG from Sodalis glossinidius (strain morsitans).